The sequence spans 137 residues: Putative pre-16S rRNA nuclease (137 aa).

The protein belongs to the YqgF nuclease family.

The protein localises to the cytoplasm. In terms of biological role, could be a nuclease involved in processing of the 5'-end of pre-16S rRNA. In Clostridium kluyveri (strain NBRC 12016), this protein is Putative pre-16S rRNA nuclease.